The sequence spans 203 residues: Thymidylate kinase (203 aa).

Residue 9–16 (GPEGAGKT) coordinates ATP.

Belongs to the thymidylate kinase family.

It carries out the reaction dTMP + ATP = dTDP + ADP. Its function is as follows. Phosphorylation of dTMP to form dTDP in both de novo and salvage pathways of dTTP synthesis. The sequence is that of Thymidylate kinase from Staphylococcus epidermidis (strain ATCC 35984 / DSM 28319 / BCRC 17069 / CCUG 31568 / BM 3577 / RP62A).